Here is a 514-residue protein sequence, read N- to C-terminus: M-phase inducer phosphatase 1 (514 aa).

A Phosphodegron motif is present at residues 73-83 (MGSSESTDSGF). Position 75 is a phosphoserine; by CHEK1 (Ser-75). Phosphoserine; by NEK11 occurs at positions 78, 81, and 87. Ser-106 is subject to Phosphoserine. A Phosphoserine; by CHEK1 and CHEK2 modification is found at Ser-123. Positions 140–142 (KEN) match the KEN box motif. Ser-172 bears the Phosphoserine; by CHEK1 mark. Residues 256 to 308 (PCGSSTRAVLKRADRSHEEPPRGTKRRKSVPSPVKAKADVPEPAQLPSQSLSL) are disordered. The span at 266 to 277 (KRADRSHEEPPR) shows a compositional bias: basic and acidic residues. A phosphoserine; by CHEK1 and CHEK2 mark is found at Ser-271 and Ser-284. At Ser-311 the chain carries Phosphoserine. Positions 366-472 (LIKEFVIIDC…FFLKCQSHCE (107 aa)) constitute a Rhodanese domain. Cys-421 is a catalytic residue. At Thr-497 the chain carries Phosphothreonine; by CHEK1. Residues Ser-503 and Ser-509 each carry the phosphoserine; by PLK3 modification.

The protein belongs to the MPI phosphatase family. In terms of assembly, interacts with CCNB1/cyclin B1. Interacts with YWHAE/14-3-3 epsilon when phosphorylated. Interacts with CUL1 specifically when CUL1 is neddylated and active. Interacts with BTRC/BTRCP1 and FBXW11/BTRCP2. Interactions with CUL1, BTRC and FBXW11 are enhanced upon DNA damage. Interacts with CHEK2; mediates CDC25A phosphorylation and degradation in response to infrared-induced DNA damages. Interacts with HSP90AB1; prevents heat shock-mediated CDC25A degradation and contributes to cell cycle progression. Post-translationally, phosphorylated by CHEK1 on Ser-75, Ser-123, Ser-172, Ser-271, Ser-284 and Thr-497 during checkpoint mediated cell cycle arrest. Also phosphorylated by CHEK2 on Ser-123, Ser-271, and Ser-284 during checkpoint mediated cell cycle arrest. Phosphorylation on Ser-172 and Thr-497 creates binding sites for YWHAE/14-3-3 epsilon which inhibits CDC25A. Phosphorylation on Ser-75, Ser-123, Ser-172, Ser-271 and Ser-284 may also promote ubiquitin-dependent proteolysis of CDC25A by the SCF complex. Phosphorylation of CDC25A at Ser-75 by CHEK1 primes it for subsequent phosphorylation at Ser-75, Ser-81 and Ser-87 by NEK11. Phosphorylation by NEK11 is required for BTRC-mediated polyubiquitination and degradation. Phosphorylation by PIM1 leads to an increase in phosphatase activity. Phosphorylated by PLK3 following DNA damage, leading to promote its ubiquitination and degradation. In terms of processing, ubiquitinated by the anaphase promoting complex/cyclosome (APC/C) ubiquitin ligase complex that contains FZR1/CDH1 during G1 phase leading to its degradation by the proteasome. Ubiquitinated by a SCF complex containing BTRC and FBXW11 during S phase leading to its degradation by the proteasome. Deubiquitination by USP17L2/DUB3 leads to its stabilization. As to expression, ubiquitously expressed in most developing tissue. High levels in the testis and lower levels in the ovary, particularly in germ cells. Lower levels also in kidney, liver, heart and muscle.

The catalysed reaction is O-phospho-L-tyrosyl-[protein] + H2O = L-tyrosyl-[protein] + phosphate. Stimulated by B-type cyclins. Stimulated by PIM1-mediated phosphorylation. In terms of biological role, tyrosine protein phosphatase which functions as a dosage-dependent inducer of mitotic progression. Directly dephosphorylates CDK1 and stimulates its kinase activity. Also dephosphorylates CDK2 in complex with cyclin-E, in vitro. This chain is M-phase inducer phosphatase 1 (Cdc25a), found in Mus musculus (Mouse).